Consider the following 420-residue polypeptide: Serine hydroxymethyltransferase (420 aa).

Residues Leu-121 and 125–127 (GHL) each bind (6S)-5,6,7,8-tetrahydrofolate. At Lys-230 the chain carries N6-(pyridoxal phosphate)lysine. (6S)-5,6,7,8-tetrahydrofolate-binding positions include Glu-246 and 354-356 (SPF).

The protein belongs to the SHMT family. As to quaternary structure, homodimer. It depends on pyridoxal 5'-phosphate as a cofactor.

It is found in the cytoplasm. The catalysed reaction is (6R)-5,10-methylene-5,6,7,8-tetrahydrofolate + glycine + H2O = (6S)-5,6,7,8-tetrahydrofolate + L-serine. It functions in the pathway one-carbon metabolism; tetrahydrofolate interconversion. It participates in amino-acid biosynthesis; glycine biosynthesis; glycine from L-serine: step 1/1. Functionally, catalyzes the reversible interconversion of serine and glycine with tetrahydrofolate (THF) serving as the one-carbon carrier. This reaction serves as the major source of one-carbon groups required for the biosynthesis of purines, thymidylate, methionine, and other important biomolecules. Also exhibits THF-independent aldolase activity toward beta-hydroxyamino acids, producing glycine and aldehydes, via a retro-aldol mechanism. In Rickettsia canadensis (strain McKiel), this protein is Serine hydroxymethyltransferase.